Reading from the N-terminus, the 147-residue chain is Transthyretin (147 aa).

A signal peptide spans 1–20 (MASHRLLLLCLAGLVFVSEA). C30 carries the sulfocysteine modification. K35 contacts L-thyroxine. E62 carries the post-translational modification 4-carboxyglutamate. S72 carries the phosphoserine modification. E74 is an L-thyroxine binding site. N118 is a glycosylation site (N-linked (GlcNAc...) asparagine). S137 contributes to the L-thyroxine binding site.

Belongs to the transthyretin family. In terms of assembly, homotetramer. Dimer of dimers. In the homotetramer, subunits assemble around a central channel that can accommodate two ligand molecules. Interacts with RBP4. Sulfonation of the reactive cysteine Cys-30 enhances the stability of the native conformation of TTR, avoiding misassembly of the protein leading to amyloid formation. As to expression, detected in brain.

Its subcellular location is the secreted. Its function is as follows. Thyroid hormone-binding protein. Probably transports thyroxine from the bloodstream to the brain. This Pan troglodytes (Chimpanzee) protein is Transthyretin (TTR).